The sequence spans 421 residues: Zinc metalloproteinase-disintegrin-like lachestatin-1 (421 aa).

The 197-residue stretch at 10–206 folds into the Peptidase M12B domain; it reads KYVKLVLVAD…DMPQCILEKP (197 aa). 3 cysteine pairs are disulfide-bonded: C121–C201, C161–C185, and C163–C168. H146 serves as a coordination point for Zn(2+). E147 is a catalytic residue. Zn(2+) contacts are provided by H150 and H156. The 86-residue stretch at 214–299 folds into the Disintegrin domain; that stretch reads PPVCGNYFVE…AECTDRFQRN (86 aa). Ca(2+)-binding residues include V216, N219, F221, E223, E226, and D229. Cystine bridges form between C217–C246, C228–C241, C230–C236, C240–C263, C254–C260, C259–C285, C272–C292, C279–C310, C303–C315, C322–C372, C337–C383, C350–C360, C367–C409, and C403–C414. The short motif at 278-280 is the D/ECD-tripeptide element; it reads ECD. Positions 280, 281, 283, 294, and 295 each coordinate Ca(2+). N-linked (GlcNAc...) asparagine glycosylation is present at N312.

Belongs to the venom metalloproteinase (M12B) family. P-III subfamily. P-IIIc sub-subfamily. As to quaternary structure, homodimer; disulfide-linked. Requires Zn(2+) as cofactor. In terms of tissue distribution, expressed by the venom gland.

The protein resides in the secreted. Its function is as follows. Snake venom zinc metalloprotease that induces apoptosis in vascular endothelial cells (VEC), without degrading the extracellular matrix (it cannot cleave collagen) or inhibiting adhesion of VEC. Has also fibrinogenolytic and hemorrhagic activities. The chain is Zinc metalloproteinase-disintegrin-like lachestatin-1 from Lachesis muta rhombeata (Bushmaster).